The sequence spans 305 residues: U6 small nuclear RNA (adenine-(43)-N(6))-methyltransferase (305 aa).

5 residues coordinate S-adenosyl-L-methionine: arginine 85, glycine 110, glutamate 133, serine 164, and asparagine 186. Positions 194–217 (SPNPFGGNTRNPQRRPAPNNVRTG) are disordered.

This sequence belongs to the methyltransferase superfamily. METTL16/RlmF family.

It carries out the reaction adenosine in U6 snRNA + S-adenosyl-L-methionine = N(6)-methyladenosine in U6 snRNA + S-adenosyl-L-homocysteine + H(+). In terms of biological role, RNA N6-methyltransferase that mediates N6-methylation of adenine of U6 small nuclear RNA (U6 snRNA). The protein is U6 small nuclear RNA (adenine-(43)-N(6))-methyltransferase of Drosophila pseudoobscura pseudoobscura (Fruit fly).